A 103-amino-acid chain; its full sequence is Cell division protein FtsB (103 aa).

Over 1–3 (MGK) the chain is Cytoplasmic. The helical transmembrane segment at 4-21 (LTLLLLALLVWLQYSLWF) threads the bilayer. Over 22–103 (GKNGIHDYSR…RAGGPAQNNR (82 aa)) the chain is Periplasmic. A coiled-coil region spans residues 38–62 (VQQATNAKLKARNDQLFAEIDDLNG).

The protein belongs to the FtsB family. As to quaternary structure, part of a complex composed of FtsB, FtsL and FtsQ.

It is found in the cell inner membrane. In terms of biological role, essential cell division protein. May link together the upstream cell division proteins, which are predominantly cytoplasmic, with the downstream cell division proteins, which are predominantly periplasmic. In Cronobacter sakazakii (strain ATCC BAA-894) (Enterobacter sakazakii), this protein is Cell division protein FtsB.